We begin with the raw amino-acid sequence, 100 residues long: Integration host factor subunit beta (100 aa).

The disordered stretch occupies residues 53–100 (LHHRPPRIGRNPKTGEPVALPGKYVPHFKPGKELRDRVNAGRHNPIQS). Over residues 82–91 (PGKELRDRVN) the composition is skewed to basic and acidic residues.

Belongs to the bacterial histone-like protein family. As to quaternary structure, heterodimer of an alpha and a beta chain.

In terms of biological role, this protein is one of the two subunits of integration host factor, a specific DNA-binding protein that functions in genetic recombination as well as in transcriptional and translational control. This chain is Integration host factor subunit beta, found in Alkalilimnicola ehrlichii (strain ATCC BAA-1101 / DSM 17681 / MLHE-1).